The chain runs to 335 residues: Probable calcium-binding protein CML49 (335 aa).

The segment covering 1–10 has biased composition (low complexity); the sequence is MSGYPPSSQG. The disordered stretch occupies residues 1–154; sequence MSGYPPSSQG…PQASYGSPFA (154 aa). Residues 30–45 show a composition bias toward pro residues; sequence NPPPYGSSGSNPPPPY. Residues 46-63 show a composition bias toward low complexity; sequence GSSASSPYAVPYGAQPAP. Over residues 110–141 the composition is skewed to gly residues; sequence DYGGYGGAPQQSGHGGGYGGAPQQSGHGGGYG. 2 consecutive EF-hand domains span residues 164–199 and 230–265; these read GTDP…YNQS and FSLQ…LGFS. 9 residues coordinate Ca(2+): Asp-177, Asp-179, Ser-181, Glu-188, Asp-243, Asp-245, Ser-247, Arg-249, and Glu-254.

Potential calcium sensor. In Arabidopsis thaliana (Mouse-ear cress), this protein is Probable calcium-binding protein CML49 (CML49).